Consider the following 201-residue polypeptide: Lipoprotein signal peptidase (201 aa).

A run of 2 helical transmembrane segments spans residues 73–93 and 97–117; these read SNAI…YLMI and TIGS…NLID. Catalysis depends on residues Asp-126 and Asp-144. The chain crosses the membrane as a helical span at residues 135 to 155; the sequence is YSFPVFNLADCFITIGVIILI.

It belongs to the peptidase A8 family.

It localises to the cell inner membrane. It carries out the reaction Release of signal peptides from bacterial membrane prolipoproteins. Hydrolyzes -Xaa-Yaa-Zaa-|-(S,diacylglyceryl)Cys-, in which Xaa is hydrophobic (preferably Leu), and Yaa (Ala or Ser) and Zaa (Gly or Ala) have small, neutral side chains.. It functions in the pathway protein modification; lipoprotein biosynthesis (signal peptide cleavage). This protein specifically catalyzes the removal of signal peptides from prolipoproteins. In Rickettsia africae (strain ESF-5), this protein is Lipoprotein signal peptidase.